The chain runs to 941 residues: Zinc finger protein su(Hw) (941 aa).

Disordered regions lie at residues 1–97 and 176–211; these read MSAS…APAA and ENNN…NSSQ. Residues 47–57 show a composition bias toward low complexity; the sequence is STTTTTSRTPS. Residues 185–202 are compositionally biased toward acidic residues; the sequence is VTEDDEDLGEDGDEDGED. Phosphothreonine is present on Thr186. The C2H2-type 1; atypical zinc-finger motif lies at 220 to 242; the sequence is HVCGKCYKTFRRVQSLKKHLEFC. The segment at 290–313 adopts a C2H2-type 2 zinc-finger fold; it reads INCPDCPKSFKTQTSYERHIFITH. The C2H2-type 3; atypical zinc-finger motif lies at 319-341; that stretch reads FPCSICNANLRSEALLALHEEQH. 9 consecutive C2H2-type zinc fingers follow at residues 348–366, 380–402, 413–435, 441–463, 469–491, 497–519, 523–545, 553–577, and 596–619; these read YACK…LKRH, MSCK…LKQH, YMCH…IRTH, FDCD…RRYH, YSCT…MKRH, HKCD…SKTH, FPCE…VKTH, FSCA…EGKH, and TDCA…RTVH. Positions 760-860 are interaction with mod(mdg4); sequence ILTEEDIKLK…PIDDVIEYVL (101 aa). The disordered stretch occupies residues 864 to 941; that stretch reads DQDEGGLDKD…KKPVGEQEKA (78 aa). Basic and acidic residues-rich tracts occupy residues 869–880 and 891–941; these read GLDKDNESHSGD and KTNE…QEKA.

As to quaternary structure, component of the gypsy chromatin insulator complex, composed of Cp190, mod(mdg4) and su(Hw). The gypsy chromatin insulator complex interacts with Topors via mod(mdg4) and su(Hw). Upon ecdysone stimulation, interacts with Nup98.

The protein localises to the nucleus. It localises to the chromosome. Component of the gypsy chromatin insulator complex which is required for the function of the gypsy chromatin insulator and other endogenous chromatin insulators. Chromatin insulators are regulatory elements which establish independent domains of transcriptional activity within eukaryotic genomes. Insulators have two defining properties; they can block the communication between an enhancer and a promoter when placed between them and can also buffer transgenes from position effect variegation (PEV). Insulators are proposed to structure the chromatin fiber into independent domains of differing transcriptional potential by promoting the formation of distinct chromatin loops. This chromatin looping may involve the formation of insulator bodies, where homotypic interactions between individual subunits of the insulator complex could promote the clustering of widely spaced insulators at the nuclear periphery. Within the gypsy insulator complex, this protein binds specifically to a region of the gypsy element located 3' of the 5' long terminal repeat (LTR), and may also mediate interaction with other endogenous insulators at sites distinct from those recognized by Cp190. Cooperates with pita and cliff to recruit Cp190 and regulate insulator function at the front-ultraabdominal (Fub) boundary. This chain is Zinc finger protein su(Hw), found in Drosophila melanogaster (Fruit fly).